The primary structure comprises 472 residues: MEKNLSSRDDDALHSLSASSSYDSVYDLLHYHERGNGLTINGKPSYSIEDAGDQITRDNVSWNGSNVFGKSANLTFKFLQSARSTPDGDTGFVKFNAAQVAQAKLALQSWADLANITFTEVTGNQSANVTFGNYTRDSSGRLDYGTQAYAYLPGSGSASGTTWYNYNVDNIRSPDKMEYGRQTLTHEIGHALGLNHPGDYNAGEGNPTYREDTRQFSIMSYWSEKNTGGDFKGHYAAGPMLDDIDAIQRLYGANMTTRTGDTVYGFNSNTDRDFYTATSSSKALIFSVWDAGGKHTFDFSGYSNNQRINLNEGSLSDVGGLKGNVSIAHGVTIENAIGGSGNDLLIGNNADNILRGGAGDDILYGGGGADRLYGGSGRDTFVYTAVSDSKVAAPDWILDFQTGVDKIDLSALNTGNNLHFVNQFSGSGGEILLNWDSSASVSNLYLNLDNNTSPEFQVKIVGQVSQTADFVV.

A propeptide spanning residues 1–17 (MEKNLSSRDDDALHSLS) is cleaved from the precursor. His-186 contacts Zn(2+). Glu-187 is an active-site residue. Zn(2+)-binding residues include His-190 and Tyr-221. Residues Arg-258, Gly-260, Thr-262, Asp-290, Gly-292, Gly-293, Thr-332, Glu-334, Gly-339, Gly-341, Asp-343, Asn-348, Ala-350, Asn-352, Gly-356, Gly-357, Ala-358, Gly-359, Asp-361, Gly-365, Gly-366, Gly-367, Gly-368, Asp-370, Gly-374, Gly-375, Gly-377, Asp-379, Asp-388, Asp-395, and Asp-405 each contribute to the Ca(2+) site. Hemolysin-type calcium-binding repeat units lie at residues 337–354 (IGGSGNDLLIGNNADNIL) and 355–372 (RGGAGDDILYGGGGADRL).

It belongs to the peptidase M10B family. Ca(2+) is required as a cofactor. Zn(2+) serves as cofactor.

The protein localises to the secreted. The enzyme catalyses Preferential cleavage of bonds with hydrophobic residues in P1'.. This is Serralysin A (prtA) from Dickeya chrysanthemi (Pectobacterium chrysanthemi).